Reading from the N-terminus, the 337-residue chain is Anthranilate phosphoribosyltransferase (337 aa).

Residues glycine 80, glycine 83–aspartate 84, threonine 88, asparagine 90–threonine 93, lysine 108–serine 116, and serine 120 each bind 5-phospho-alpha-D-ribose 1-diphosphate. Glycine 80 is a binding site for anthranilate. Serine 92 contributes to the Mg(2+) binding site. Asparagine 111 serves as a coordination point for anthranilate. Arginine 166 is a binding site for anthranilate. Mg(2+) is bound by residues aspartate 225 and glutamate 226.

The protein belongs to the anthranilate phosphoribosyltransferase family. In terms of assembly, homodimer. Mg(2+) serves as cofactor.

It catalyses the reaction N-(5-phospho-beta-D-ribosyl)anthranilate + diphosphate = 5-phospho-alpha-D-ribose 1-diphosphate + anthranilate. It participates in amino-acid biosynthesis; L-tryptophan biosynthesis; L-tryptophan from chorismate: step 2/5. In terms of biological role, catalyzes the transfer of the phosphoribosyl group of 5-phosphorylribose-1-pyrophosphate (PRPP) to anthranilate to yield N-(5'-phosphoribosyl)-anthranilate (PRA). The polypeptide is Anthranilate phosphoribosyltransferase (Syntrophobacter fumaroxidans (strain DSM 10017 / MPOB)).